Consider the following 348-residue polypeptide: Alcohol dehydrogenase 1 (348 aa).

Residues cysteine 44, histidine 67, cysteine 98, cysteine 101, cysteine 104, cysteine 112, and cysteine 154 each coordinate Zn(2+). NAD(+) is bound by residues 178 to 184 (GACGGLG), aspartate 202, lysine 207, 269 to 271 (VGL), and arginine 341.

It belongs to the zinc-containing alcohol dehydrogenase family. As to quaternary structure, homotetramer. Zn(2+) is required as a cofactor.

It localises to the cytoplasm. It catalyses the reaction a primary alcohol + NAD(+) = an aldehyde + NADH + H(+). The enzyme catalyses a secondary alcohol + NAD(+) = a ketone + NADH + H(+). The chain is Alcohol dehydrogenase 1 (ADH1) from Kluyveromyces marxianus (Yeast).